A 337-amino-acid polypeptide reads, in one-letter code: DNA-directed RNA polymerase subunit alpha (337 aa).

The interval 1–233 is alpha N-terminal domain (alpha-NTD); sequence MVREDVVGST…DLLIPFLHAE (233 aa). The tract at residues 265-337 is alpha C-terminal domain (alpha-CTD); sequence KGIPLTCIFI…FAINLLNKKL (73 aa).

The protein belongs to the RNA polymerase alpha chain family. In terms of assembly, in plastids the minimal PEP RNA polymerase catalytic core is composed of four subunits: alpha, beta, beta', and beta''. When a (nuclear-encoded) sigma factor is associated with the core the holoenzyme is formed, which can initiate transcription.

The protein resides in the plastid. The protein localises to the chloroplast. It catalyses the reaction RNA(n) + a ribonucleoside 5'-triphosphate = RNA(n+1) + diphosphate. Its function is as follows. DNA-dependent RNA polymerase catalyzes the transcription of DNA into RNA using the four ribonucleoside triphosphates as substrates. This Phalaenopsis aphrodite subsp. formosana (Moth orchid) protein is DNA-directed RNA polymerase subunit alpha.